The sequence spans 460 residues: Proton extrusion protein PxcA (460 aa).

A disordered region spans residues 84–194; sequence RLPDPEQNGS…KTNLDNSNAP (111 aa). The segment covering 114 to 136 has biased composition (basic and acidic residues); it reads NDGKDAENGRQSRDPSILEKLEF. Over residues 167–194 the composition is skewed to polar residues; the sequence is LTSSQPEPSDPSIKTNLAKTNLDNSNAP. 4 helical membrane passes run 242-262, 337-357, 373-393, and 420-440; these read FLLL…HFLF, GLKN…LILI, IYGL…DVFV, and FIYG…KYWI.

Belongs to the CemA family.

It localises to the cell inner membrane. Its function is as follows. Required for H(+) efflux immediately after light irradiation to form a rapid H(+) concentration gradient across the thylakoid membranes. Together with PxcL, contributes to transient H(+) uptake following dark to light transition. The polypeptide is Proton extrusion protein PxcA (Synechococcus sp. (strain JA-3-3Ab) (Cyanobacteria bacterium Yellowstone A-Prime)).